The sequence spans 362 residues: Red-sensitive opsin (362 aa).

The Extracellular portion of the chain corresponds to M1–V49. A glycan (N-linked (GlcNAc...) asparagine) is linked at N31. The chain crosses the membrane as a helical span at residues Y50–A74. At T75 to N86 the chain is on the cytoplasmic side. A helical membrane pass occupies residues W87–I112. At S113–E126 the chain is on the extracellular side. Residues C123 and C200 are joined by a disulfide bond. A helical transmembrane segment spans residues G127 to W146. Residues E147 to L165 are Cytoplasmic-facing. Residues A166–S189 traverse the membrane as a helical segment. Topologically, residues R190–S215 are extracellular. Residues Y216–I243 form a helical membrane-spanning segment. The Cytoplasmic portion of the chain corresponds to R244 to R265. Residues M266–A289 traverse the membrane as a helical segment. Topologically, residues A290 to H297 are extracellular. Residues P298 to M322 traverse the membrane as a helical segment. K309 is subject to N6-(retinylidene)lysine. At N323 to A362 the chain is on the cytoplasmic side.

Belongs to the G-protein coupled receptor 1 family. Opsin subfamily. In terms of processing, phosphorylated on some or all of the serine and threonine residues present in the C-terminal region. In terms of tissue distribution, the color pigments are found in the cone photoreceptor cells.

The protein localises to the membrane. Its function is as follows. Visual pigments are the light-absorbing molecules that mediate vision. They consist of an apoprotein, opsin, covalently linked to cis-retinal. The sequence is that of Red-sensitive opsin from Gallus gallus (Chicken).